A 233-amino-acid chain; its full sequence is MTPHINAKIGDFYPQCLLCGDPLRVSYIAKNFLQDAKEITNVRNMLGFSGKYKGKGISLMGHGMGIASCTIYVTELIKTYQVKELLRIGTCGAISPKVGLKDIVMATGASTDSKTNRVRFLNHDLSATPDFELSLRAYQTAKRLGIDLKIGNVFSSDFFYSFETHAFGLMAQYNHLAIEMEAAGLYATAMELNAKALCLCSVSDHLITKEALSPKERIESFDNMITLALEMMS.

His4 lines the a purine D-ribonucleoside pocket. Residues Gly20, Arg24, Arg43, and Arg87–Thr90 contribute to the phosphate site. Residues Glu179 to Glu181 and Ser203 to Asp204 each bind a purine D-ribonucleoside. Asp204 (proton donor) is an active-site residue.

Belongs to the PNP/UDP phosphorylase family. In terms of assembly, homohexamer; trimer of homodimers.

The catalysed reaction is a purine D-ribonucleoside + phosphate = a purine nucleobase + alpha-D-ribose 1-phosphate. The enzyme catalyses a purine 2'-deoxy-D-ribonucleoside + phosphate = a purine nucleobase + 2-deoxy-alpha-D-ribose 1-phosphate. Catalyzes the reversible phosphorolytic breakdown of the N-glycosidic bond in the beta-(deoxy)ribonucleoside molecules, with the formation of the corresponding free purine bases and pentose-1-phosphate. The protein is Purine nucleoside phosphorylase DeoD-type of Helicobacter pylori (strain J99 / ATCC 700824) (Campylobacter pylori J99).